Here is a 368-residue protein sequence, read N- to C-terminus: Chorismate synthase (368 aa).

Arginine 46 contributes to the NADP(+) binding site. FMN contacts are provided by residues 124–126 (RAS), glycine 284, 299–303 (KPTPS), and arginine 326.

The protein belongs to the chorismate synthase family. FMNH2 is required as a cofactor.

It carries out the reaction 5-O-(1-carboxyvinyl)-3-phosphoshikimate = chorismate + phosphate. Its pathway is metabolic intermediate biosynthesis; chorismate biosynthesis; chorismate from D-erythrose 4-phosphate and phosphoenolpyruvate: step 7/7. Catalyzes the anti-1,4-elimination of the C-3 phosphate and the C-6 proR hydrogen from 5-enolpyruvylshikimate-3-phosphate (EPSP) to yield chorismate, which is the branch point compound that serves as the starting substrate for the three terminal pathways of aromatic amino acid biosynthesis. This reaction introduces a second double bond into the aromatic ring system. This Pyrobaculum arsenaticum (strain DSM 13514 / JCM 11321 / PZ6) protein is Chorismate synthase.